The sequence spans 321 residues: MINAVDLHKVYQLKGREVVALRGVSLHVPQGEIYGVVGPSGAGKSTLLRCINLLERPDRGEIWVDGRNLTALPPPQLRAARRGIGMIHQHFALLSSRTVAGNVAFPLEIAGVPRAERRRRVAELLELVGLADKAAAYPAQLSGGQKQRVGIARALAPRPTVLLSDEATSALDPATTASILDLLRDLNRELGLTILLITHEMDVVKRICDAVAIMDRGSVVETGRTVDLLRTPGSLLARSLFAPPPVSGDGVVTLTWVDQAEEPLISQLTRLFDVDVSILGGALEEVAGHAVGRLTVRITGERSAEALTYLTDRNVLVEEVP.

Positions 2–241 (INAVDLHKVY…PGSLLARSLF (240 aa)) constitute an ABC transporter domain. Position 38–45 (38–45 (GPSGAGKS)) interacts with ATP.

The protein belongs to the ABC transporter superfamily. Methionine importer (TC 3.A.1.24) family. In terms of assembly, the complex is composed of two ATP-binding proteins (MetN), two transmembrane proteins (MetI) and a solute-binding protein (MetQ).

The protein localises to the cell membrane. The enzyme catalyses L-methionine(out) + ATP + H2O = L-methionine(in) + ADP + phosphate + H(+). It carries out the reaction D-methionine(out) + ATP + H2O = D-methionine(in) + ADP + phosphate + H(+). In terms of biological role, part of the ABC transporter complex MetNIQ involved in methionine import. Responsible for energy coupling to the transport system. This chain is Methionine import ATP-binding protein MetN, found in Thermobifida fusca (strain YX).